The following is an 877-amino-acid chain: Envelope glycoprotein gp160 (877 aa).

The signal sequence occupies residues 1–19 (MKLTLLIGILLIGIGVVLN). Residues 20–707 (TRQQWVTVFY…SWFDFSKWLN (688 aa)) are Extracellular-facing. Residues asparagine 36, asparagine 69, asparagine 118, asparagine 135, asparagine 148, asparagine 158, asparagine 173, asparagine 204, asparagine 216, asparagine 258, asparagine 261, asparagine 272, asparagine 282, asparagine 288, asparagine 300, asparagine 312, asparagine 322, asparagine 379, asparagine 420, asparagine 431, asparagine 495, and asparagine 498 are each glycosylated (N-linked (GlcNAc...) asparagine; by host). 5 cysteine pairs are disulfide-bonded: cysteine 102/cysteine 224, cysteine 109/cysteine 215, cysteine 114/cysteine 174, cysteine 237/cysteine 267, and cysteine 247/cysteine 259. The interval 114 to 173 (CVELNSSEPTTTPKSTTASTTNITASTTTLPCVQNKTSTVLESCNETIIEKELNEEPASN) is V1. The tract at residues 174-215 (CTFAMAGYVRDQKKKYSVVWNDAEIMCKKGNNSNRECYMIHC) is V2. The interval 317–349 (CKRPGNKTVLPVTIMAGLVFHSQRYNTRLRQAW) is V3. Cysteine 317 and cysteine 350 are oxidised to a cystine. Disulfide bonds link cysteine 402–cysteine 478 and cysteine 409–cysteine 451. Residues 409 to 451 (CKMDWFLNYLNNRTVDPDHNPCNGTKGKGKAPGPCAQRTYVAC) form a V4 region. Residues 494–501 (KNRTNVTL) form a V5 region. A fusion peptide region spans residues 544 to 564 (VPFVLGFLGFLGAAGTAMGAA). Residues 607–623 (LNARVTALEKYLEDQAR) are immunosuppression. Residues asparagine 652 and asparagine 668 are each glycosylated (N-linked (GlcNAc...) asparagine; by host). Positions 668–692 (NITTQLEEARAQEEKNLDAYQKLSS) form a coiled coil. The segment at 689–710 (KLSSWSDFWSWFDFSKWLNILK) is MPER; binding to GalCer. The chain crosses the membrane as a helical span at residues 708-728 (ILKIGFLDVLGIIGLRLLYTV). Over 729–877 (YSCIARVRQG…VRQGLEGILN (149 aa)) the chain is Cytoplasmic. The short motif at 739–742 (YSPL) is the YXXL motif; contains endocytosis signal element. The segment at 751 to 779 (WKGQPDNAEGPGEGGDKRKNSSEPWQKES) is disordered.

The mature envelope protein (Env) consists of a homotrimer of non-covalently associated gp120-gp41 heterodimers. The resulting complex protrudes from the virus surface as a spike. Interacts with host CD4 and CCR5. Gp120 also interacts with the C-type lectins CD209/DC-SIGN and CLEC4M/DC-SIGNR (collectively referred to as DC-SIGN(R)). In terms of assembly, the mature envelope protein (Env) consists of a homotrimer of non-covalently associated gp120-gp41 heterodimers. The resulting complex protrudes from the virus surface as a spike. Post-translationally, specific enzymatic cleavages in vivo yield mature proteins. Envelope glycoproteins are synthesized as an inactive precursor that is heavily N-glycosylated and processed likely by host cell furin in the Golgi to yield the mature SU and TM proteins. The cleavage site between SU and TM requires the minimal sequence [KR]-X-[KR]-R.

The protein localises to the virion membrane. Its subcellular location is the host cell membrane. The protein resides in the host endosome membrane. In terms of biological role, the surface protein gp120 (SU) attaches the virus to the host lymphoid cell by binding to the primary receptor CD4. This interaction induces a structural rearrangement creating a high affinity binding site for a chemokine coreceptor like CCR5. This peculiar 2 stage receptor-interaction strategy allows gp120 to maintain the highly conserved coreceptor-binding site in a cryptic conformation, protected from neutralizing antibodies. These changes are transmitted to the transmembrane protein gp41 and are thought to activate its fusogenic potential by unmasking its fusion peptide. Surface protein gp120 (SU) may target the virus to gut-associated lymphoid tissue (GALT) by binding host ITGA4/ITGB7 (alpha-4/beta-7 integrins), a complex that mediates T-cell migration to the GALT. Interaction between gp120 and ITGA4/ITGB7 would allow the virus to enter GALT early in the infection, infecting and killing most of GALT's resting CD4+ T-cells. This T-cell depletion is believed to be the major insult to the host immune system leading to AIDS. Its function is as follows. The surface protein gp120 is a ligand for CD209/DC-SIGN and CLEC4M/DC-SIGNR, which are respectively found on dendritic cells (DCs), and on endothelial cells of liver sinusoids and lymph node sinuses. These interactions allow capture of viral particles at mucosal surfaces by these cells and subsequent transmission to permissive cells. DCs are professional antigen presenting cells, critical for host immunity by inducing specific immune responses against a broad variety of pathogens. They act as sentinels in various tissues where they take up antigen, process it, and present it to T-cells following migration to lymphoid organs. SIV subverts the migration properties of dendritic cells to gain access to CD4+ T-cells in lymph nodes. Virus transmission to permissive T-cells occurs either in trans (without DCs infection, through viral capture and transmission), or in cis (following DCs productive infection, through the usual CD4-gp120 interaction), thereby inducing a robust infection. In trans infection, bound virions remain infectious over days and it is proposed that they are not degraded, but protected in non-lysosomal acidic organelles within the DCs close to the cell membrane thus contributing to the viral infectious potential during DCs' migration from the periphery to the lymphoid tissues. On arrival at lymphoid tissues, intact virions recycle back to DCs' cell surface allowing virus transmission to CD4+ T-cells. Virion capture also seems to lead to MHC-II-restricted viral antigen presentation, and probably to the activation of SIV-specific CD4+ cells. Functionally, the transmembrane protein gp41 (TM) acts as a class I viral fusion protein. Under the current model, the protein has at least 3 conformational states: pre-fusion native state, pre-hairpin intermediate state, and post-fusion hairpin state. During fusion of viral and target intracellular membranes, the coiled coil regions (heptad repeats) assume a trimer-of-hairpins structure, positioning the fusion peptide in close proximity to the C-terminal region of the ectodomain. The formation of this structure appears to drive apposition and subsequent fusion of viral and target cell membranes. Complete fusion occurs in host cell endosomes. The virus undergoes clathrin-dependent internalization long before endosomal fusion, thus minimizing the surface exposure of conserved viral epitopes during fusion and reducing the efficacy of inhibitors targeting these epitopes. Membranes fusion leads to delivery of the nucleocapsid into the cytoplasm. In terms of biological role, the envelope glycoprotein gp160 precursor down-modulates cell surface CD4 antigen by interacting with it in the endoplasmic reticulum and blocking its transport to the cell surface. The gp120-gp41 heterodimer allows rapid transcytosis of the virus through CD4 negative cells such as simple epithelial monolayers of the intestinal, rectal and endocervical epithelial barriers. Both gp120 and gp41 specifically recognize glycosphingolipids galactosyl-ceramide (GalCer) or 3' sulfo-galactosyl-ceramide (GalS) present in the lipid rafts structures of epithelial cells. Binding to these alternative receptors allows the rapid transcytosis of the virus through the epithelial cells. This transcytotic vesicle-mediated transport of virions from the apical side to the basolateral side of the epithelial cells does not involve infection of the cells themselves. The chain is Envelope glycoprotein gp160 (env) from Cercopithecidae (Old World monkeys).